We begin with the raw amino-acid sequence, 230 residues long: Voltage-gated hydrogen channel 1 (230 aa).

The Cytoplasmic portion of the chain corresponds to 1 to 58 (MAGCLRHFTSVGDDTKKREWKQEDVEVAYEEPLKNTPHPFIASYSFRGALKWLLSSHK). The helical transmembrane segment at 59–79 (FQIVIICLVILDALFVLVEVL) threads the bilayer. The Extracellular segment spans residues 80–96 (LDLELLAEKVDHIIPEI). A helical membrane pass occupies residues 97–119 (FHYLSISVLTFFILEIAGKLYAF). The Cytoplasmic portion of the chain corresponds to 120 to 127 (RLEFFHHK). The helical transmembrane segment at 128 to 148 (FEVFDAAIVVISFIIDIVYIS) threads the bilayer. Over 149–155 (REDIFNA) the chain is Extracellular. A helical membrane pass occupies residues 156–176 (VGLLILLRLWRVARIVNGVIV). Residues 177–230 (SVKTRAEEKMHKLKEQKGSLLEKVAQLEQQCAQQEQEIGRLHKLLQEHNVFPAS) are Cytoplasmic-facing. The stretch at 178–225 (VKTRAEEKMHKLKEQKGSLLEKVAQLEQQCAQQEQEIGRLHKLLQEHN) forms a coiled coil.

The protein belongs to the hydrogen channel family. Homodimer.

The protein localises to the membrane. The protein resides in the cell membrane. Mediates the voltage-dependent proton permeability of excitable membranes. Forms a proton-selective channel through which protons may pass in accordance with their electrochemical gradient. The protein is Voltage-gated hydrogen channel 1 (hvcn1) of Xenopus laevis (African clawed frog).